A 239-amino-acid polypeptide reads, in one-letter code: Orotidine 5'-phosphate decarboxylase (239 aa).

Substrate contacts are provided by residues Asp-15, Lys-36, 63-72, Thr-127, Arg-189, Gln-198, Gly-218, and Arg-219; that span reads DLKFHDIPNT. Lys-65 acts as the Proton donor in catalysis.

Belongs to the OMP decarboxylase family. Type 1 subfamily. As to quaternary structure, homodimer.

It catalyses the reaction orotidine 5'-phosphate + H(+) = UMP + CO2. It functions in the pathway pyrimidine metabolism; UMP biosynthesis via de novo pathway; UMP from orotate: step 2/2. Functionally, catalyzes the decarboxylation of orotidine 5'-monophosphate (OMP) to uridine 5'-monophosphate (UMP). The sequence is that of Orotidine 5'-phosphate decarboxylase from Prochlorococcus marinus subsp. pastoris (strain CCMP1986 / NIES-2087 / MED4).